The chain runs to 67 residues: MARITVEDCLKQIPNRFELALAATYRARQLAQGHTPKIESRDKPTVVALREIASGLVGVEMLKKVPV.

The protein belongs to the RNA polymerase subunit omega family. In terms of assembly, the RNAP catalytic core consists of 2 alpha, 1 beta, 1 beta' and 1 omega subunit. When a sigma factor is associated with the core the holoenzyme is formed, which can initiate transcription.

The enzyme catalyses RNA(n) + a ribonucleoside 5'-triphosphate = RNA(n+1) + diphosphate. Its function is as follows. Promotes RNA polymerase assembly. Latches the N- and C-terminal regions of the beta' subunit thereby facilitating its interaction with the beta and alpha subunits. The sequence is that of DNA-directed RNA polymerase subunit omega from Burkholderia ambifaria (strain ATCC BAA-244 / DSM 16087 / CCUG 44356 / LMG 19182 / AMMD) (Burkholderia cepacia (strain AMMD)).